The following is a 423-amino-acid chain: Probable M18 family aminopeptidase 2 (423 aa).

Residues His84, His157, and His397 each contribute to the Zn(2+) site.

This sequence belongs to the peptidase M18 family. The cofactor is Zn(2+).

The polypeptide is Probable M18 family aminopeptidase 2 (apeB) (Borreliella burgdorferi (strain ATCC 35210 / DSM 4680 / CIP 102532 / B31) (Borrelia burgdorferi)).